Here is a 233-residue protein sequence, read N- to C-terminus: Leucyl/phenylalanyl-tRNA--protein transferase (233 aa).

This sequence belongs to the L/F-transferase family.

It localises to the cytoplasm. The catalysed reaction is N-terminal L-lysyl-[protein] + L-leucyl-tRNA(Leu) = N-terminal L-leucyl-L-lysyl-[protein] + tRNA(Leu) + H(+). The enzyme catalyses N-terminal L-arginyl-[protein] + L-leucyl-tRNA(Leu) = N-terminal L-leucyl-L-arginyl-[protein] + tRNA(Leu) + H(+). It catalyses the reaction L-phenylalanyl-tRNA(Phe) + an N-terminal L-alpha-aminoacyl-[protein] = an N-terminal L-phenylalanyl-L-alpha-aminoacyl-[protein] + tRNA(Phe). Functions in the N-end rule pathway of protein degradation where it conjugates Leu, Phe and, less efficiently, Met from aminoacyl-tRNAs to the N-termini of proteins containing an N-terminal arginine or lysine. The polypeptide is Leucyl/phenylalanyl-tRNA--protein transferase (Laribacter hongkongensis (strain HLHK9)).